Reading from the N-terminus, the 235-residue chain is Segregation and condensation protein A (235 aa).

The protein belongs to the ScpA family. Component of a cohesin-like complex composed of ScpA, ScpB and the Smc homodimer, in which ScpA and ScpB bind to the head domain of Smc. The presence of the three proteins is required for the association of the complex with DNA.

The protein localises to the cytoplasm. Participates in chromosomal partition during cell division. May act via the formation of a condensin-like complex containing Smc and ScpB that pull DNA away from mid-cell into both cell halves. This is Segregation and condensation protein A from Streptococcus agalactiae serotype Ia (strain ATCC 27591 / A909 / CDC SS700).